A 149-amino-acid polypeptide reads, in one-letter code: Protein-export protein SecB (149 aa).

It belongs to the SecB family. As to quaternary structure, homotetramer, a dimer of dimers. One homotetramer interacts with 1 SecA dimer.

It is found in the cytoplasm. In terms of biological role, one of the proteins required for the normal export of preproteins out of the cell cytoplasm. It is a molecular chaperone that binds to a subset of precursor proteins, maintaining them in a translocation-competent state. It also specifically binds to its receptor SecA. This is Protein-export protein SecB from Acidithiobacillus ferrooxidans (strain ATCC 23270 / DSM 14882 / CIP 104768 / NCIMB 8455) (Ferrobacillus ferrooxidans (strain ATCC 23270)).